A 369-amino-acid chain; its full sequence is Leucine-specific-binding protein (369 aa).

A signal peptide spans 1–23 (MKRKAKTIIAGIVALAVSQGAMA). A disulfide bridge connects residues Cys76 and Cys101.

It belongs to the leucine-binding protein family.

The protein localises to the periplasm. Its function is as follows. This protein is a component of the leucine-specific transport system, which is one of the two periplasmic binding protein-dependent transport systems of the high-affinity transport of the branched-chain amino acids. This is Leucine-specific-binding protein (livK) from Salmonella typhi.